The chain runs to 420 residues: Glutamate dehydrogenase (420 aa).

Lysine 105 is an active-site residue. NAD(+) is bound at residue 220-226 (GYGNAGY).

Belongs to the Glu/Leu/Phe/Val dehydrogenases family. Homohexamer.

The protein localises to the cytoplasm. The enzyme catalyses L-glutamate + NAD(+) + H2O = 2-oxoglutarate + NH4(+) + NADH + H(+). The catalysed reaction is L-glutamate + NADP(+) + H2O = 2-oxoglutarate + NH4(+) + NADPH + H(+). This is Glutamate dehydrogenase (gdhA) from Pyrococcus abyssi (strain GE5 / Orsay).